Consider the following 542-residue polypeptide: Chaperonin GroEL (542 aa).

Residues 29-32 (TLGP), 86-90 (DGTTT), Gly413, and Asp492 contribute to the ATP site.

It belongs to the chaperonin (HSP60) family. In terms of assembly, forms a cylinder of 14 subunits composed of two heptameric rings stacked back-to-back. Interacts with the co-chaperonin GroES.

Its subcellular location is the cytoplasm. It catalyses the reaction ATP + H2O + a folded polypeptide = ADP + phosphate + an unfolded polypeptide.. Functionally, together with its co-chaperonin GroES, plays an essential role in assisting protein folding. The GroEL-GroES system forms a nano-cage that allows encapsulation of the non-native substrate proteins and provides a physical environment optimized to promote and accelerate protein folding. The chain is Chaperonin GroEL from Nocardia asteroides.